The primary structure comprises 116 residues: Putative RNase MJ0125 (116 aa).

Residues R76 and H81 contribute to the active site. Positions 76–83 (RDKLIHQY) match the RX(4)HXY motif motif. Y83 is modified (O-di-AMP-tyrosine).

The protein belongs to the HepT RNase toxin family. In terms of assembly, homodimer, probably forms a complex with cognate antitoxin MJ0126. Modified by cognate antitoxin MJ0126; probably at least 2 successive AMPylation events occur on Tyr-83.

Functionally, probable toxic component of a putative type VII toxin-antitoxin (TA) system, probably an RNase. Probably neutralized by cognate antitoxin MJ0126. Neutralization may be due to AMPylation by MJ0126. The chain is Putative RNase MJ0125 from Methanocaldococcus jannaschii (strain ATCC 43067 / DSM 2661 / JAL-1 / JCM 10045 / NBRC 100440) (Methanococcus jannaschii).